A 106-amino-acid polypeptide reads, in one-letter code: Cell division protein FtsB (106 aa).

The Cytoplasmic portion of the chain corresponds to 1–3 (MGK). A helical membrane pass occupies residues 4 to 21 (LTLLLLALLGWLQYSLWL). The Periplasmic segment spans residues 22–106 (GKNGVHDYVR…ASSSQNNLQK (85 aa)). Positions 40-62 (QGSNAKLKARNDQLFAEIDDLNG) form a coiled coil.

Belongs to the FtsB family. As to quaternary structure, part of a complex composed of FtsB, FtsL and FtsQ.

It is found in the cell inner membrane. Essential cell division protein. May link together the upstream cell division proteins, which are predominantly cytoplasmic, with the downstream cell division proteins, which are predominantly periplasmic. The polypeptide is Cell division protein FtsB (Serratia proteamaculans (strain 568)).